Reading from the N-terminus, the 201-residue chain is Small ribosomal subunit protein uS4c (201 aa).

Residues 15-43 (LGALPGLTNKRPRAGSDLRNQSRSGKRSQ) are disordered. Residues 89–149 (MRLDNILFRL…DEQKSIALIQ (61 aa)) enclose the S4 RNA-binding domain.

Component of the chloroplast small ribosomal subunit (SSU). Mature 70S chloroplast ribosomes of higher plants consist of a small (30S) and a large (50S) subunit. The 30S small subunit contains 1 molecule of ribosomal RNA (16S rRNA) and 24 different proteins. The 50S large subunit contains 3 rRNA molecules (23S, 5S and 4.5S rRNA) and 33 different proteins.

The protein resides in the plastid. Its subcellular location is the chloroplast. Functionally, component of the chloroplast ribosome (chloro-ribosome), a dedicated translation machinery responsible for the synthesis of chloroplast genome-encoded proteins, including proteins of the transcription and translation machinery and components of the photosynthetic apparatus. In Spinacia oleracea (Spinach), this protein is Small ribosomal subunit protein uS4c (rps4).